The sequence spans 86 residues: Neuropeptide precursor capa-1 (86 aa).

The N-terminal stretch at 1 to 19 (MLLWIVATLLIFSLPVSTA) is a signal peptide.

Expressed in two pairs of neurons in the anterior part of the nervous system (at protein level).

Functionally, encodes at least three neuropeptides: two of the periviscerokinin family (APHPSSALLVPYPRV-amide and LYMARV-amide) and one pyrokinin (AFFYTPRI-amide). Its function is as follows. Putative ligand for neuromedin U receptor homolog nmur-2. This Caenorhabditis elegans protein is Neuropeptide precursor capa-1.